A 159-amino-acid polypeptide reads, in one-letter code: Heavy metal-associated isoprenylated plant protein 28 (159 aa).

Positions 10-73 (LQTIEMRVHM…KVRKTGRRAE (64 aa)) constitute an HMA domain. 2 residues coordinate a metal cation: C21 and C24. C156 is modified (cysteine methyl ester). The S-farnesyl cysteine moiety is linked to residue C156. The propeptide at 157–159 (SIM) is removed in mature form.

Belongs to the HIPP family.

In terms of biological role, heavy-metal-binding protein. The protein is Heavy metal-associated isoprenylated plant protein 28 of Arabidopsis thaliana (Mouse-ear cress).